The chain runs to 116 residues: CDKN2AIP N-terminal-like protein (116 aa).

At M1 the chain carries N-acetylmethionine. The XRN2-binding (XTBD) domain occupies 24–116 (AEQFRSYSES…RSELMKKHQS (93 aa)).

This sequence belongs to the CARF family. In terms of assembly, interacts with XRN2; the interaction is direct.

In Homo sapiens (Human), this protein is CDKN2AIP N-terminal-like protein (CDKN2AIPNL).